Consider the following 320-residue polypeptide: Olfactory receptor 13C8 (320 aa).

The Extracellular portion of the chain corresponds to 1–25 (MERTNDSTSTEFFLVGLSAHPKLQT). Asparagine 5 carries an N-linked (GlcNAc...) asparagine glycan. The chain crosses the membrane as a helical span at residues 26 to 46 (VFFVLILWMYLMILLGNGVLI). The Cytoplasmic segment spans residues 47–54 (SVIIFDSH). Residues 55 to 75 (LHTPMYFFLCNLSFLDVCYTS) form a helical membrane-spanning segment. At 76–99 (SSVPLILASFLAVKKKVSFSGCMV) the chain is on the extracellular side. Cysteine 97 and cysteine 189 are oxidised to a cystine. The helical transmembrane segment at 100-120 (QMFISFAMGATECMILGTMAL) threads the bilayer. The Cytoplasmic portion of the chain corresponds to 121–139 (DRYVAICYPLRYPVIMSKG). Residues 140 to 160 (AYVAMAAGSWVTGLVDSVVQT) form a helical membrane-spanning segment. Over 161–197 (AFAMQLPFCANNVIKHFVCEILAILKLACADISINVI) the chain is Extracellular. A helical membrane pass occupies residues 198–217 (SMTGSNLIVLVIPLLVISIS). Residues 218–237 (YIFIVATILRIPSTEGKHKA) lie on the Cytoplasmic side of the membrane. Residues 238 to 258 (FSTCSAHLTVVIIFYGTIFFM) form a helical membrane-spanning segment. At 259-277 (YAKPESKASVDSGNEDIIE) the chain is on the extracellular side. Residues 278–298 (ALISLFYGVMTPMLNPLIYSL) form a helical membrane-spanning segment. Residues 299–320 (RNKDVKAAVKNILCRKNFSDGK) are Cytoplasmic-facing.

The protein belongs to the G-protein coupled receptor 1 family.

The protein resides in the cell membrane. In terms of biological role, odorant receptor. This Homo sapiens (Human) protein is Olfactory receptor 13C8 (OR13C8).